A 249-amino-acid polypeptide reads, in one-letter code: Transcription initiation factor TFIID subunit 9B (249 aa).

Residue methionine 1 is modified to N-acetylmethionine. The residue at position 147 (serine 147) is a Phosphoserine. A disordered region spans residues 148–171 (AVSSRPTTPPVAPPQAVSGPNKAA). Residue threonine 172 is modified to Phosphothreonine. Serine 175 is modified (phosphoserine). Residues 224–234 (VSSQNTATDSN) are compositionally biased toward polar residues. The disordered stretch occupies residues 224–249 (VSSQNTATDSNPLKRKHDDDDDNDTM).

This sequence belongs to the TAF9 family. In terms of assembly, binds TAF5 and TAF6. Component of TFIID and the TATA-binding protein-free TAF complex (TFTC). TFIID is composed of TATA binding protein (TBP) and a number of TBP-associated factors (TAFs). Binds N-terminal domain of p53/TP53 which is essential for transcription.

The protein localises to the nucleus. Functionally, essential for cell viability. TAF9 and TAF9B are involved in transcriptional activation as well as repression of distinct but overlapping sets of genes. May have a role in gene regulation associated with apoptosis. TAFs are components of the transcription factor IID (TFIID) complex, the TBP-free TAFII complex (TFTC), the PCAF histone acetylase complex and the STAGA transcription coactivator-HAT complex. TFIID or TFTC are essential for the regulation of RNA polymerase II-mediated transcription. The sequence is that of Transcription initiation factor TFIID subunit 9B (Taf9b) from Mus musculus (Mouse).